The primary structure comprises 423 residues: Pre-mRNA-splicing regulator WTAP (423 aa).

Positions 234 to 423 (QQLSQMNQTQ…TSNASAGSVL (190 aa)) are disordered. 4 stretches are compositionally biased toward polar residues: residues 239–276 (MNQT…SSNV), 285–301 (NGPS…SGSS), 358–377 (DSPT…TDSN), and 392–404 (TAGT…NGLD). Residues 405–423 (SSAAAVATNTSNASAGSVL) are compositionally biased toward low complexity.

Belongs to the fl(2)d family. As to quaternary structure, component of the WMM complex, a N6-methyltransferase complex composed of a catalytic subcomplex, named MAC, and of an associated subcomplex, named MACOM. Component of the MACOM subcomplex.

Its subcellular location is the nucleus speckle. The protein localises to the nucleus. The protein resides in the nucleoplasm. Functionally, associated component of the WMM complex, a complex that mediates N6-methyladenosine (m6A) methylation of RNAs, a modification that plays a role in the efficiency of mRNA splicing and RNA processing. The protein is Pre-mRNA-splicing regulator WTAP of Danio rerio (Zebrafish).